Here is a 2087-residue protein sequence, read N- to C-terminus: Rho GTPase-activating protein 32 (2087 aa).

The PX; atypical domain occupies 131-245 (GSIQLSLSEE…LTWMEIDNKG (115 aa)). The region spanning 259-321 (PAVGAAHVIK…PGHCVELINQ (63 aa)) is the SH3 domain. A Rho-GAP domain is found at 372-567 (CDLGEHLLNS…FILNHVDVLF (196 aa)). Residues Ser-706, Ser-709, Ser-732, and Ser-738 each carry the phosphoserine modification. The segment at 818-858 (FLDSPGYSKDKPSANKKDAETGSSQCQTPGSTASSEPVSPL) is disordered. Basic and acidic residues predominate over residues 825-837 (SKDKPSANKKDAE). Residues 838-854 (TGSSQCQTPGSTASSEP) show a composition bias toward polar residues. A phosphoserine mark is found at Ser-852, Ser-856, and Ser-892. Over residues 927–938 (SNTTAQNASSST) the composition is skewed to low complexity. Disordered stretches follow at residues 927–1038 (SNTT…PPKN), 1103–1143 (PAEQ…EQHH), and 1169–1257 (VPLD…ENTS). At Ser-952 the chain carries Phosphoserine. Low complexity-rich tracts occupy residues 994-1005 (SVSSSQSKAVAS) and 1019-1029 (QDSVPVSSVSL). Residues 1124–1138 (TTATGDPTHSNTTES) are compositionally biased toward polar residues. Residues 1172 to 1182 (DSEKSDDHVSF) are compositionally biased toward basic and acidic residues. The segment covering 1188 to 1203 (GKNSMPTVSFLDQDQS) has biased composition (polar residues). Residue Ser-1203 is modified to Phosphoserine. Over residues 1222–1232 (DKLHHPLEFAD) the composition is skewed to basic and acidic residues. The interaction with GAB2 stretch occupies residues 1391 to 1711 (RVPLLHLRAE…YSYAGLAPRP (321 aa)). 2 positions are modified to asymmetric dimethylarginine: Arg-1523 and Arg-1533. Ser-1585 is modified (phosphoserine). The interaction with FYN stretch occupies residues 1685-2087 (PNRDFAFYNP…QHPETQIHAE (403 aa)). The disordered stretch occupies residues 1798 to 1896 (PGKTGLLSVA…QFCESKNGPP (99 aa)). The span at 1823–1838 (GEDRFYRRHPEAEMDR) shows a compositional bias: basic and acidic residues. The segment covering 1847-1862 (STQPEKPSLPQKQSSL) has biased composition (polar residues). Residues 1875-1889 (PEHRAHQEASHRQFC) are compositionally biased toward basic and acidic residues. Arg-2037 bears the Omega-N-methylarginine mark.

It belongs to the PX domain-containing GAP family. In terms of assembly, interacts with NTRK1 (via cytoplasmic domain); the interaction is independent of the phosphorylation state of NTRK1. Interacts with SHC3 (via SH2 domain). Interacts with RASA1 (via SH3 domain); the interaction is necessary for the Ras activation and cell transforming activities of ARHGAP32. Interacts with GAB1 and GAB2. Interacts with CRK and CRKL. Found in a complex with CRKL and BCAR1; upon EGF stimulation BCAR1 may be replaced by EGFR. Interacts with NCK1 (via SH3 domain); NCK1 recruits phosphorylated BCAR1 to the complex. Isoform 2 interacts with FYN; the interaction appears to be dependent on tyrosine phosphorylation of ARHGAP32. Interacts with EGFR; the interaction requires EGF stimulation and is increased by SHC3. Interacts with CDC42; the interaction requires constitutively active CDC42. Interacts with CTNNB1. Interacts with GRIN2B. Interacts with DLG4 and CDH2. Interacts with GPHN. In terms of processing, isoform 2 is phosphorylated on multiple tyrosine residues by FYN. Phosphorylated tyrosine residues undergo dephosphorylation after stimulation of NMDA receptors. Phosphorylated in vitro by CaMK2 in the presence of calmodulin and calcium; which inhibits GAP activity. In terms of tissue distribution, isoform 1 and isoform 2 are highly expressed in brain and testis. Isoform 1 is also expressed in other tissues such as lung, liver and spleen.

Its subcellular location is the postsynaptic density. It localises to the cell projection. The protein resides in the dendritic spine. It is found in the cytoplasm. The protein localises to the cell cortex. Its subcellular location is the endosome membrane. It localises to the golgi apparatus membrane. The protein resides in the endoplasmic reticulum membrane. It is found in the membrane. In terms of biological role, GTPase-activating protein (GAP) promoting GTP hydrolysis on RHOA, CDC42 and RAC1 small GTPases. May be involved in the differentiation of neuronal cells during the formation of neurite extensions. Involved in NMDA receptor activity-dependent actin reorganization in dendritic spines. May mediate cross-talks between Ras- and Rho-regulated signaling pathways in cell growth regulation. Isoform 2 has higher GAP activity. The chain is Rho GTPase-activating protein 32 (ARHGAP32) from Homo sapiens (Human).